A 156-amino-acid polypeptide reads, in one-letter code: ATP synthase subunit b (156 aa).

Residues 12–32 (IAFAIFVWFCVKYVWPPITAA) form a helical membrane-spanning segment.

The protein belongs to the ATPase B chain family. As to quaternary structure, F-type ATPases have 2 components, F(1) - the catalytic core - and F(0) - the membrane proton channel. F(1) has five subunits: alpha(3), beta(3), gamma(1), delta(1), epsilon(1). F(0) has three main subunits: a(1), b(2) and c(10-14). The alpha and beta chains form an alternating ring which encloses part of the gamma chain. F(1) is attached to F(0) by a central stalk formed by the gamma and epsilon chains, while a peripheral stalk is formed by the delta and b chains.

The protein resides in the cell inner membrane. Functionally, f(1)F(0) ATP synthase produces ATP from ADP in the presence of a proton or sodium gradient. F-type ATPases consist of two structural domains, F(1) containing the extramembraneous catalytic core and F(0) containing the membrane proton channel, linked together by a central stalk and a peripheral stalk. During catalysis, ATP synthesis in the catalytic domain of F(1) is coupled via a rotary mechanism of the central stalk subunits to proton translocation. In terms of biological role, component of the F(0) channel, it forms part of the peripheral stalk, linking F(1) to F(0). This chain is ATP synthase subunit b, found in Marinobacter nauticus (strain ATCC 700491 / DSM 11845 / VT8) (Marinobacter aquaeolei).